We begin with the raw amino-acid sequence, 204 residues long: Synaptosomal-associated protein 25-A (204 aa).

The segment covering 1 to 11 (MAEDSDMRNEL) has biased composition (basic and acidic residues). A disordered region spans residues 1–25 (MAEDSDMRNELADMQQRADQLADES). T-SNARE coiled-coil homology domains follow at residues 19–81 (DQLA…LNDL) and 138–200 (DARE…ATKM).

Belongs to the SNAP-25 family. In terms of tissue distribution, expressed in several regions throughout the adult brain, including the mesencephalon.

Its subcellular location is the synapse. The protein localises to the synaptosome. It is found in the cell membrane. In terms of biological role, may play an important role in the synaptic function of specific neuronal systems. Associates with proteins involved in vesicle docking and membrane fusion. The polypeptide is Synaptosomal-associated protein 25-A (Danio rerio (Zebrafish)).